Reading from the N-terminus, the 757-residue chain is Polyribonucleotide nucleotidyltransferase (757 aa).

2 residues coordinate Mg(2+): aspartate 487 and aspartate 493. Residues 554 to 613 (PRITTVRVKPDQIRLIIGPGGKTIKGIVDQTGVAIDVEDDGTVNVASADSDAVKRALDII) form the KH domain. The 69-residue stretch at 623 to 691 (GATYKGTVKR…REGKIRLSRR (69 aa)) folds into the S1 motif domain. Positions 697-757 (PEGEEGDRAR…PPRERRERRS (61 aa)) are disordered. 2 stretches are compositionally biased toward basic and acidic residues: residues 702–711 (GDRARERMAQ) and 719–757 (PRRD…ERRS).

The protein belongs to the polyribonucleotide nucleotidyltransferase family. It depends on Mg(2+) as a cofactor.

It localises to the cytoplasm. It carries out the reaction RNA(n+1) + phosphate = RNA(n) + a ribonucleoside 5'-diphosphate. Its function is as follows. Involved in mRNA degradation. Catalyzes the phosphorolysis of single-stranded polyribonucleotides processively in the 3'- to 5'-direction. The polypeptide is Polyribonucleotide nucleotidyltransferase (Sorangium cellulosum (strain So ce56) (Polyangium cellulosum (strain So ce56))).